The primary structure comprises 220 residues: Large ribosomal subunit protein uL6c (220 aa).

The N-terminal 38 residues, 1–38, are a transit peptide targeting the chloroplast; that stretch reads MSLPLPSHMKSVFLGMKVEISTSVPVTRIGFWRKSVDC.

As to quaternary structure, component of the chloroplast large ribosomal subunit (LSU). Mature 70S chloroplast ribosomes of higher plants consist of a small (30S) and a large (50S) subunit. The 30S small subunit contains 1 molecule of ribosomal RNA (16S rRNA) and 24 different proteins. The 50S large subunit contains 3 rRNA molecules (23S, 5S and 4.5S rRNA) and 33 different proteins.

It localises to the plastid. The protein resides in the chloroplast. In terms of biological role, component of the chloroplast ribosome (chloro-ribosome), a dedicated translation machinery responsible for the synthesis of chloroplast genome-encoded proteins, including proteins of the transcription and translation machinery and components of the photosynthetic apparatus. The sequence is that of Large ribosomal subunit protein uL6c (RPL6) from Spinacia oleracea (Spinach).